The primary structure comprises 589 residues: Parathyroid hormone/parathyroid hormone-related peptide receptor (589 aa).

A signal peptide spans 1–28; it reads MGAARIAPGLALLLCCPVLSSAYALVDA. The Extracellular segment spans residues 29 to 188; sequence DDVMTKEEQI…REREVFDRLG (160 aa). Disulfide bonds link Cys-48-Cys-117, Cys-108-Cys-148, and Cys-131-Cys-170. Residues 64–105 are disordered; the sequence is ESDKGWASASTSGKPKKEKPSGKLHPESEEDKEVPTGSRPRG. Residues 81-90 are compositionally biased toward basic and acidic residues; sequence EKPSGKLHPE. Residues Asn-151, Asn-161, Asn-166, and Asn-176 are each glycosylated (N-linked (GlcNAc...) asparagine). The chain crosses the membrane as a helical span at residues 189-209; it reads MIYTVGYSVSLASLTVAVLIL. At 210–223 the chain is on the cytoplasmic side; the sequence is AYFRRLHCTRNYIH. A helical transmembrane segment spans residues 224-244; sequence MHLFLSFMLRAVSIFVKDAVL. The Extracellular segment spans residues 245–294; it reads YSGTALDEAERLTEEELRAIAQAPPPPAAAAGYVGCRVAVTFFLYFLATN. Residues 295 to 315 traverse the membrane as a helical segment; it reads YYWILVEGLYLHSLIFMAFFS. Residues 316 to 318 lie on the Cytoplasmic side of the membrane; sequence EKK. Residues 319-339 form a helical membrane-spanning segment; sequence YLWGFTVFGWGLPAIFVAVWV. Residues 340-360 are Extracellular-facing; that stretch reads SVRATLANTGCWDLSSGNKKW. Residues 361–381 form a helical membrane-spanning segment; the sequence is IIQVPILASIVLNFILFINIV. At 382-404 the chain is on the cytoplasmic side; it reads RVLATKLRETNAGRCDTRQQYRK. The helical transmembrane segment at 405–425 threads the bilayer; that stretch reads LLKSTLVLMPLFGVHYIVFMA. Residues 426 to 439 are Extracellular-facing; sequence TPYTEVSGTLWQVQ. A helical transmembrane segment spans residues 440-460; that stretch reads MHYEMLFNSFQGFFVAIIYCF. Residues 461–589 are Cytoplasmic-facing; it reads CNGEVQAEIK…LLQEEWETVM (129 aa). Positions 473–476 match the Important for interaction with G proteins motif; it reads WSRW. The tract at residues 524 to 549 is disordered; sequence AATTNGHPPLPGHTKSGSPALQATPP. The residue at position 547 (Thr-547) is a Phosphothreonine.

Belongs to the G-protein coupled receptor 2 family. In terms of assembly, homodimer in the absence of bound ligand. Peptide hormone binding leads to dissociation of the homodimer. N-glycosylated.

The protein resides in the cell membrane. In terms of biological role, G-protein-coupled receptor for parathyroid hormone (PTH) and for parathyroid hormone-related peptide (PTHLH). Ligand binding causes a conformation change that triggers signaling via guanine nucleotide-binding proteins (G proteins) and modulates the activity of downstream effectors, such as adenylate cyclase (cAMP). PTH1R is coupled to G(s) G alpha proteins and mediates activation of adenylate cyclase activity. PTHLH dissociates from PTH1R more rapidly than PTH; as consequence, the cAMP response induced by PTHLH decays faster than the response induced by PTH. This Bos taurus (Bovine) protein is Parathyroid hormone/parathyroid hormone-related peptide receptor (PTH1R).